Consider the following 334-residue polypeptide: Glycerol-3-phosphate dehydrogenase [NAD(P)+] (334 aa).

Ser-14, Tyr-15, His-35, and Lys-109 together coordinate NADPH. 3 residues coordinate sn-glycerol 3-phosphate: Lys-109, Gly-138, and Thr-140. Ala-142 is an NADPH binding site. Lys-194, Asp-247, Ser-257, Arg-258, and Asn-259 together coordinate sn-glycerol 3-phosphate. Lys-194 functions as the Proton acceptor in the catalytic mechanism. An NADPH-binding site is contributed by Arg-258. The NADPH site is built by Val-282 and Glu-284.

The protein belongs to the NAD-dependent glycerol-3-phosphate dehydrogenase family.

It is found in the cytoplasm. It carries out the reaction sn-glycerol 3-phosphate + NAD(+) = dihydroxyacetone phosphate + NADH + H(+). The catalysed reaction is sn-glycerol 3-phosphate + NADP(+) = dihydroxyacetone phosphate + NADPH + H(+). It functions in the pathway membrane lipid metabolism; glycerophospholipid metabolism. Catalyzes the reduction of the glycolytic intermediate dihydroxyacetone phosphate (DHAP) to sn-glycerol 3-phosphate (G3P), the key precursor for phospholipid synthesis. This Aeromonas hydrophila subsp. hydrophila (strain ATCC 7966 / DSM 30187 / BCRC 13018 / CCUG 14551 / JCM 1027 / KCTC 2358 / NCIMB 9240 / NCTC 8049) protein is Glycerol-3-phosphate dehydrogenase [NAD(P)+].